Reading from the N-terminus, the 1503-residue chain is E3 ubiquitin-protein ligase listerin (1503 aa).

HEAT repeat units lie at residues 52 to 89, 93 to 129, 133 to 170, 280 to 318, 323 to 345, 346 to 384, 552 to 589, 640 to 663, 664 to 700, 845 to 882, 1022 to 1065, 1078 to 1117, 1141 to 1183, and 1302 to 1340; these read SGIDDETRIVMRKLTKKDCQTREKGLRELTNIIAETSS, CYEHFCGLVPQLSTDGSPTVRLLTMKTITLFLVKLEK, KGLKKIIPMVLFARCDVTNGVAAAAGAVIRDGFEADKK, LNTPSIVTYIQNHLDSQTFTPECSTAWEGMIILLPSAQF, SLQNGIYPRFLNVIRKKGNHWRV, LQHFLLPAVVLLLKEMGSLENNMKVLGTIMESFTDNLPW, GDIVRLIKLLLENQEIKSLNISVKNDHVGRRLLLTGGS, AENVEFLITLLRKMKSTDVSNEAE, KNVLILKLFTAIFESDEDAKSEHYNCLSEHLTSDFNS, LEKRYSLVALTEELQRSRREIEERLIRSDEVRFKLDDS, TLFI…RMFR, RTLLKAMFTLVEFPTNVPNDSVVTREFVPELSVFKYSLLE, AAAK…VMIS, and FKSITLLPAAVRLFHKNIPNNFKPIFQEVVTKHASKLLI. The RING-type zinc-finger motif lies at 1446–1499; the sequence is CTICMMTVHQQTNQLPKVKCKQCKNRFHSNCLVSSFHTYKWFESSNQSTCPLCR.

The protein belongs to the LTN1 family. In terms of assembly, component of the ribosome quality control complex (RQC), composed of at least the E3 ubiquitin ligase ltn1 and nemf. The complex probably also contains tcf25 as well as vcp/p97 and its ubiquitin-binding cofactors. RQC forms a stable complex with 60S ribosomal subunits.

It is found in the cytoplasm. It localises to the cytosol. The catalysed reaction is S-ubiquitinyl-[E2 ubiquitin-conjugating enzyme]-L-cysteine + [acceptor protein]-L-lysine = [E2 ubiquitin-conjugating enzyme]-L-cysteine + N(6)-ubiquitinyl-[acceptor protein]-L-lysine.. It functions in the pathway protein modification; protein ubiquitination. Functionally, E3 ubiquitin-protein ligase. Component of the ribosome quality control complex (RQC), a ribosome-associated complex that mediates ubiquitination and extraction of incompletely synthesized nascent chains for proteasomal degradation. Ubiquitination leads to vcp/p97 recruitment for extraction and degradation of the incomplete translation product. In Caenorhabditis briggsae, this protein is E3 ubiquitin-protein ligase listerin.